The sequence spans 202 residues: Ribosomal RNA small subunit methyltransferase G (202 aa).

S-adenosyl-L-methionine-binding positions include Gly-75, Phe-80, 125–126 (VQ), and Arg-139.

It belongs to the methyltransferase superfamily. RNA methyltransferase RsmG family.

Its subcellular location is the cytoplasm. Its function is as follows. Specifically methylates the N7 position of a guanine in 16S rRNA. The sequence is that of Ribosomal RNA small subunit methyltransferase G from Mesomycoplasma hyopneumoniae (strain J / ATCC 25934 / NCTC 10110) (Mycoplasma hyopneumoniae).